The following is a 444-amino-acid chain: Elongation factor 1-alpha (444 aa).

In terms of domain architecture, tr-type G spans 15 to 236; the sequence is KPHINLAVVG…VLDTFQPPPR (222 aa). The interval 24–31 is G1; sequence GHVDNGKS. Residue 24–31 participates in GTP binding; sequence GHVDNGKS. Mg(2+) is bound at residue S31. The tract at residues 80–84 is G2; that stretch reads GVTIE. A G3 region spans residues 101 to 104; the sequence is DLPG. GTP contacts are provided by residues 101–105 and 163–166; these read DLPGH and NKMD. The G4 stretch occupies residues 163 to 166; the sequence is NKMD. A G5 region spans residues 202 to 204; that stretch reads SAV.

This sequence belongs to the TRAFAC class translation factor GTPase superfamily. Classic translation factor GTPase family. EF-Tu/EF-1A subfamily.

It is found in the cytoplasm. It carries out the reaction GTP + H2O = GDP + phosphate + H(+). In terms of biological role, GTP hydrolase that promotes the GTP-dependent binding of aminoacyl-tRNA to the A-site of ribosomes during protein biosynthesis. This Pyrobaculum arsenaticum (strain DSM 13514 / JCM 11321 / PZ6) protein is Elongation factor 1-alpha.